The primary structure comprises 1687 residues: Genome polyprotein (1687 aa).

The segment covering 1–13 (MRMATPSSAPSVR) has biased composition (polar residues). The tract at residues 1–56 (MRMATPSSAPSVRNTEKRKNKKASSKASVSFGAPSPLSSESEDEINYMTPPEQEAQ) is disordered. An interaction with host MAP1LC3A/LC3 region spans residues 1 to 116 (MRMATPSSAP…FRRYPHLRPK (116 aa)). An interaction with NTPase region spans residues 117–341 (EDRPDAPSHA…ISIFGEWQAE (225 aa)). Residues 244–341 (SPVQDWNVDP…ISIFGEWQAE (98 aa)) are interaction with NS4. Host ER membrane association regions lie at residues 261 to 292 (KLRM…KPLN) and 302 to 341 (WTFS…WQAE). The tract at residues 342–518 (GPFDLALDVV…GKTCFCQNLA (177 aa)) is interaction with NS1-2, NS4 and homooligomerization. An SF3 helicase domain is found at 476–641 (RISMARAAFE…DDARARAPGD (166 aa)). 504–511 (GRPGIGKT) serves as a coordination point for ATP. Positions 595-700 (VIIITTNQQT…AVALVHERHD (106 aa)) are important for mitochondrion targeting. The segment at 893–898 (DEEYDE) is acidic. Residue Tyr-896 is modified to O-(5'-phospho-RNA)-tyrosine. Positions 978–994 (WADDDRQVDYGEKINFE) are interaction with host EIF4G. A Peptidase C37 domain is found at 995 to 1172 (APVSIWSRVV…AATHGEPTLE (178 aa)). Residues His-1024, Asp-1048, and Cys-1133 each act as for 3CLpro activity in the active site. The 122-residue stretch at 1416 to 1537 (RYHMDADYTR…STNLELDMVK (122 aa)) folds into the RdRp catalytic domain. Positions 1420 and 1422 each coordinate Mg(2+). A disulfide bridge links Cys-1482 with Cys-1484. The Mg(2+) site is built by Asp-1524, Glu-1525, and Ser-1569.

As to quaternary structure, homodimer. Interacts with NTPase; this interaction increases the proapoptotic activity of the NTPase and is crucial for the formation of the viral replication complex. Interacts with NS4; this interaction is crucial for the formation of the viral replication complex. Interacts (via N-terminus) with host VAPA. Interacts with host VAPB. In terms of assembly, monomer. Homooligomer. Interacts with NS1-2; this interaction increases the proapoptotic activity of the NTPase and is crucial for the formation of the viral replication complex. Interacts with NS4; this interaction increases the proapoptotic activity of the NTPase. Interacts with host G3BP1; this interaction leads to the redistribution of G3BP1 and its cellular partners to the viral replication complexes, thereby preventing the assembly of stress granules. As to quaternary structure, homodimer. Monomer; in solution. In terms of assembly, interacts with NTPase; this interaction increases the proapoptotic activity of the NTPase. Interacts with NS1-2; this interaction is crucial for the formation of the viral replication complex. Monomer. Interacts with the RNA-directed RNA polymerase; this interaction induces the multimerization of the RdRp and enhances its activity. Interacts with host IEF4E; this interaction plays a role in translation of viral proteins. Interacts (via C-terminus) with host IEF4G1 (via central domain); this interaction plays a role in translation of viral proteins. As to quaternary structure, homohexamer; also forms fibrous hexameric oligomer. Interacts with the viral genome-linked protein; this interaction induces the multimerization of the RdRp and enhances its activity. The cofactor is Mg(2+). Mn(2+) is required as a cofactor. Specific enzymatic cleavages in vivo yield mature proteins. 3CLpro is first autocatalytically cleaved, then processes the whole polyprotein. In terms of processing, cleaved by host CASP3/caspase 3 at 18-22 h.p.i. The cleavage allows NS1 secretion, which is essential for intestinal infection and resistance to IFN-lambda. Post-translationally, VPg is uridylylated by the polymerase and is covalently attached to the 5'-end of the polyadenylated genomic and subgenomic RNAs. This uridylylated form acts as a nucleotide-peptide primer for the polymerase.

It is found in the host endoplasmic reticulum membrane. The protein localises to the secreted. Its subcellular location is the host endosome membrane. It localises to the host mitochondrion. The protein resides in the host cytoplasm. It is found in the host perinuclear region. It catalyses the reaction a ribonucleoside 5'-triphosphate + H2O = a ribonucleoside 5'-diphosphate + phosphate + H(+). It carries out the reaction Endopeptidase with a preference for cleavage when the P1 position is occupied by Glu-|-Xaa and the P1' position is occupied by Gly-|-Yaa.. The catalysed reaction is RNA(n) + a ribonucleoside 5'-triphosphate = RNA(n+1) + diphosphate. With respect to regulation, inhibited by Suramin, Suramin-related compounds and NF023. Inhibited by PPNDS. Its function is as follows. Induces the proliferation of the host smooth ER membranes forming long tubular structures. These remodeled membranes probably form the viral factories that contain the replication complex. May play a role in viral replication by interacting with host VAPA, a vesicle-associated membrane protein that plays a role in SNARE-mediated vesicle fusion. This interaction may target replication complex to intracellular membranes. In terms of biological role, promotes intestinal tropism and persistent fecal shedding in strain CR6. This function requires Glu-94 and is present in persistant strains. Functionally, displays NTPase activity, but probably no helicase activity. Displays RNA chaperone-like activity and destabilizes dsRNA. Induces the formation of convoluted membranes derived from the host ER. These remodeled membranes probably form the viral factories that contain the replication complex. Initiates host cell death by targeting the mitochondrial outer membrane, leading to the permeabilization of mitochondria, programmed host cell death and viral egress. Externalization of host cardiolipin seems to be involved in the process. Probably plays a role in preventing the assembly of host stress granules. Probable key protein responsible for the formation of membrane alterations by the virus. Induces the formation of convoluted membranes derived from the host ER. These remodeled membranes probably form the viral factories that contain the replication complex. May play a role in targeting replication complex to intracellular membranes. Its function is as follows. Viral genome-linked protein is covalently linked to the 5'-end of the positive-strand, negative-strand genomic RNAs and subgenomic RNA. Acts as a genome-linked replication primer. May recruit ribosome to viral RNA thereby promoting viral proteins translation. Interacts with host translation initiation complex to allow the translation of viral proteins. Induces the formation of aggregates of RNA-directed RNA polymerase in the presence of RNA. Through its interaction with the viral RNA-directed RNA polymerase, plays a crucial role in enhancing the polymerase activity. In terms of biological role, processes the polyprotein. 3CLpro-RdRp is first released by autocleavage, then all other proteins are cleaved. May cleave host polyadenylate-binding protein thereby inhibiting cellular translation. Does not cleave host G3BP1. Functionally, replicates genomic and antigenomic RNA by recognizing replications specific signals. Also transcribes a subgenomic mRNA by initiating RNA synthesis internally on antigenomic RNA. This sgRNA codes for structural proteins. Catalyzes the covalent attachment VPg with viral RNAs. The chain is Genome polyprotein from Norovirus (isolate Mouse/NoV/United States/MNV1/2002/GV) (MNV-1).